A 225-amino-acid chain; its full sequence is tRNA (guanine-N(1)-)-methyltransferase (225 aa).

S-adenosyl-L-methionine is bound by residues G110 and 130–135; that span reads VGDYVL.

Belongs to the RNA methyltransferase TrmD family. Homodimer.

The protein resides in the cytoplasm. It catalyses the reaction guanosine(37) in tRNA + S-adenosyl-L-methionine = N(1)-methylguanosine(37) in tRNA + S-adenosyl-L-homocysteine + H(+). Its function is as follows. Specifically methylates guanosine-37 in various tRNAs. This is tRNA (guanine-N(1)-)-methyltransferase from Neorickettsia sennetsu (strain ATCC VR-367 / Miyayama) (Ehrlichia sennetsu).